The following is a 152-amino-acid chain: Interleukin-1 family member 10 (152 aa).

It belongs to the IL-1 family. In terms of assembly, interacts with cargo receptor TMED10; the interaction mediates the translocation from the cytoplasm into the ERGIC (endoplasmic reticulum-Golgi intermediate compartment) and thereby secretion. Expressed in fetal skin, spleen and tonsil. Expressed mostly in the basal epithelia of skin and in proliferating B-cells of the tonsil.

It localises to the cytoplasm. The protein localises to the secreted. In terms of biological role, cytokine with immunomodulatory activity. Alone, does not induce cytokine production, but reduces IL22 and IL17A production by T-cells in response to heat-killed Candida albicans. Reduces IL36G-induced production of IL8 by peripheral blood mononuclear cells. Increases IL6 production by dendritic cells stimulated by bacterial lipopolysaccharides (LPS). Ligand for IL-36R/IL1RL2. The polypeptide is Interleukin-1 family member 10 (Homo sapiens (Human)).